Reading from the N-terminus, the 222-residue chain is Large ribosomal subunit protein mL64 (222 aa).

Disordered stretches follow at residues 1 to 51 (MAAP…PRWQ), 136 to 170 (RRQQ…HVDP), and 182 to 222 (LEKQ…TPDS). The segment covering 141-170 (ARREKAQADKERRARLQAEAQERLGYHVDP) has biased composition (basic and acidic residues). A coiled-coil region spans residues 144 to 213 (EKAQADKERR…AAMAAAAAQD (70 aa)). The short motif at 184-200 (KQHRKRLKEEKQRKKKE) is the Nuclear localization signal element. The segment covering 203 to 212 (AAAMAAAAAQ) has biased composition (low complexity).

Belongs to the mitochondrion-specific ribosomal protein mL64 family. Component of the mitochondrial ribosome large subunit (39S) which comprises a 16S rRNA and about 50 distinct proteins. Interacts with GADD45A, GADD45B and GADD45G. Interacts with NR4A1 via the NR4A1 AB domain. Interacts with ATAD3A and ATAD3B.

The protein localises to the mitochondrion. It localises to the nucleus. In terms of biological role, acts as a negative regulator of G1 to S cell cycle phase progression by inhibiting cyclin-dependent kinases. Inhibitory effects are additive with GADD45 proteins but also occur in the absence of GADD45 proteins. Acts as a repressor of the orphan nuclear receptor NR4A1 by inhibiting AB domain-mediated transcriptional activity. May be involved in the hormone-mediated regulation of NR4A1 transcriptional activity. May play a role in mitochondrial protein synthesis. In Bos taurus (Bovine), this protein is Large ribosomal subunit protein mL64 (GADD45GIP1).